The following is a 310-amino-acid chain: Protoheme IX farnesyltransferase (310 aa).

A run of 9 helical transmembrane segments spans residues 37-57 (LITVFAGYVVAASYLTDDVLL), 64-84 (LTLLWTLLGSGLVIAGSCYLN), 113-133 (ILALGLGILATGTVLLLIVNH), 134-154 (VAAVFGLIGSFVYVVIYTMWL), 159-181 (TINTVVGGISGAVPPIIGFAAVT), 186-208 (IDAWILFLIMFVWQPPHFLALAM), 215-237 (RAAGIPMLPVVNGFAITKRQIVW), 257-277 (MLVMAVLGGYWLYMGLKGLKI), and 290-310 (MFFFSLFYFTAWIVTVVLVSL).

Belongs to the UbiA prenyltransferase family. Protoheme IX farnesyltransferase subfamily. As to quaternary structure, interacts with CtaA.

It is found in the cell membrane. The catalysed reaction is heme b + (2E,6E)-farnesyl diphosphate + H2O = Fe(II)-heme o + diphosphate. The protein operates within porphyrin-containing compound metabolism; heme O biosynthesis; heme O from protoheme: step 1/1. Functionally, converts heme B (protoheme IX) to heme O by substitution of the vinyl group on carbon 2 of heme B porphyrin ring with a hydroxyethyl farnesyl side group. This is Protoheme IX farnesyltransferase from Exiguobacterium sibiricum (strain DSM 17290 / CCUG 55495 / CIP 109462 / JCM 13490 / 255-15).